A 200-amino-acid chain; its full sequence is ATP-dependent Clp protease proteolytic subunit (200 aa).

Ser98 functions as the Nucleophile in the catalytic mechanism. His123 is an active-site residue.

This sequence belongs to the peptidase S14 family. In terms of assembly, fourteen ClpP subunits assemble into 2 heptameric rings which stack back to back to give a disk-like structure with a central cavity, resembling the structure of eukaryotic proteasomes.

Its subcellular location is the cytoplasm. The catalysed reaction is Hydrolysis of proteins to small peptides in the presence of ATP and magnesium. alpha-casein is the usual test substrate. In the absence of ATP, only oligopeptides shorter than five residues are hydrolyzed (such as succinyl-Leu-Tyr-|-NHMec, and Leu-Tyr-Leu-|-Tyr-Trp, in which cleavage of the -Tyr-|-Leu- and -Tyr-|-Trp bonds also occurs).. Cleaves peptides in various proteins in a process that requires ATP hydrolysis. Has a chymotrypsin-like activity. Plays a major role in the degradation of misfolded proteins. This Deinococcus geothermalis (strain DSM 11300 / CIP 105573 / AG-3a) protein is ATP-dependent Clp protease proteolytic subunit.